The sequence spans 127 residues: Apolipoprotein C-IV (127 aa).

A signal peptide spans 1–27 (MSLLRNRLQDLPALCLCVLVLACIGAC).

It belongs to the apolipoprotein C4 family.

The protein resides in the secreted. May participate in lipoprotein metabolism. In Chlorocebus sabaeus (Green monkey), this protein is Apolipoprotein C-IV (APOC4).